Here is a 403-residue protein sequence, read N- to C-terminus: Deubiquitinase and deneddylase Dub1 (403 aa).

The span at 1 to 11 shows a compositional bias: polar residues; the sequence is MLSPTNSTSKT. A disordered region spans residues 1–24; that stretch reads MLSPTNSTSKTAPVPPRDSSKPVL. A helical transmembrane segment spans residues 40–60; that stretch reads TALAVLLVVVTLGLILLFYSF. Residues 77 to 132 are disordered; the sequence is KEQPTISIPVPLPSPPLAVPRPSTPPAPTPAISRPSTPSAPKPSTPPPLLPKAPKP. Pro residues-rich tracts occupy residues 86–105 and 114–130; these read VPLPSPPLAVPRPSTPPAPT and PSAPKPSTPPPLLPKAP. Residues histidine 277, aspartate 294, and cysteine 347 contribute to the active site.

Belongs to the peptidase C48 family.

It localises to the secreted. It is found in the host cell. The protein resides in the membrane. Its function is as follows. Effector proteins function to alter host cell physiology and promote bacterial survival in host tissues. This protease possesses deubiquitinating and deneddylating activities. The chain is Deubiquitinase and deneddylase Dub1 (cdu1) from Chlamydia trachomatis serovar L2b (strain UCH-1/proctitis).